A 448-amino-acid chain; its full sequence is UDP-N-acetylmuramoylalanine--D-glutamate ligase (448 aa).

Position 116-122 (116-122 (GSNAKST)) interacts with ATP.

The protein belongs to the MurCDEF family.

The protein localises to the cytoplasm. The catalysed reaction is UDP-N-acetyl-alpha-D-muramoyl-L-alanine + D-glutamate + ATP = UDP-N-acetyl-alpha-D-muramoyl-L-alanyl-D-glutamate + ADP + phosphate + H(+). The protein operates within cell wall biogenesis; peptidoglycan biosynthesis. In terms of biological role, cell wall formation. Catalyzes the addition of glutamate to the nucleotide precursor UDP-N-acetylmuramoyl-L-alanine (UMA). In Pseudomonas syringae pv. tomato (strain ATCC BAA-871 / DC3000), this protein is UDP-N-acetylmuramoylalanine--D-glutamate ligase.